Here is an 843-residue protein sequence, read N- to C-terminus: Taste receptor type 1 member 2 (843 aa).

Positions 1-19 (MGPQARTLCLLSLLLHVLP) are cleaved as a signal peptide. Residues 20–570 (KPGKLVENSD…TFLEWHEVPT (551 aa)) lie on the Extracellular side of the membrane. N-linked (GlcNAc...) asparagine glycosylation is found at N87, N296, N316, N355, N372, N432, N484, N491, and N531. The helical transmembrane segment at 571-591 (IVVAILAALGFFSTLAILFIF) threads the bilayer. The Cytoplasmic segment spans residues 592–606 (WRHFQTPMVRSAGGP). A helical membrane pass occupies residues 607–627 (MCFLMLVPLLLAFGMVPVYVG). Topologically, residues 628–642 (PPTVFSCFCRQAFFT) are extracellular. The chain crosses the membrane as a helical span at residues 643 to 663 (VCFSICLSCITVRSFQIVCVF). The Cytoplasmic segment spans residues 664 to 682 (KMARRLPSAYSFWMRYHGP). Residues 683–703 (YVFVAFITAIKVALVVGNMLA) traverse the membrane as a helical segment. The Extracellular portion of the chain corresponds to 704–731 (TTINPIGRTDPDDPNIMILSCHPNYRNG). A helical transmembrane segment spans residues 732-752 (LLFNTSMDLLLSVLGFSFAYM). The Cytoplasmic portion of the chain corresponds to 753–764 (GKELPTNYNEAK). A helical membrane pass occupies residues 765 to 785 (FITLSMTFSFTSSISLCTFMS). The Extracellular segment spans residues 786–789 (VHDG). The helical transmembrane segment at 790 to 810 (VLVTIMDLLVTVLNFLAIGLG) threads the bilayer. The Cytoplasmic portion of the chain corresponds to 811–843 (YFGPKCYMILFYPERNTSAYFNSMIQGYTMRKS).

The protein belongs to the G-protein coupled receptor 3 family. TAS1R subfamily. In terms of assembly, forms heterodimers with TAS1R3. In terms of tissue distribution, abundantly expressed in circumvallate and foliate papillae.

The protein localises to the cell membrane. Its function is as follows. Putative taste receptor. TAS1R2/TAS1R3 recognizes diverse natural and synthetic sweeteners. The protein is Taste receptor type 1 member 2 (Tas1r2) of Rattus norvegicus (Rat).